A 206-amino-acid polypeptide reads, in one-letter code: CASP-like protein 1F1 (206 aa).

Residues 1 to 43 (MCFQFSILYTCYLAHFGVFPRKYLVMAGIEAKFQQNPPLGTHK) lie on the Cytoplasmic side of the membrane. A helical membrane pass occupies residues 44-64 (LFLGAHICLRILTVTATLTAA). At 65–92 (WMMITSKQTVEVYGIQVEAKYSYSSAFK) the chain is on the extracellular side. A helical transmembrane segment spans residues 93–113 (FFSYANAIACGCSVLTLFPAF). Over 114–124 (SLFYRGSTPMK) the chain is Cytoplasmic. A helical membrane pass occupies residues 125–145 (FFFLFLHDLCMMSLVLAGCAA). Topologically, residues 146–177 (ATAIGYVGRYGNNHAGWMAICDQFDEYCNRIR) are extracellular. The helical transmembrane segment at 178–198 (LSLMFSYLAFVFILMLTIMSA) threads the bilayer. Over 199 to 206 (NKSREIRV) the chain is Cytoplasmic.

Belongs to the Casparian strip membrane proteins (CASP) family. In terms of assembly, homodimer and heterodimers.

The protein localises to the cell membrane. The polypeptide is CASP-like protein 1F1 (Vitis vinifera (Grape)).